The following is a 326-amino-acid chain: MTMSQMNQDAEGYFRVWKPEEASPGHQESPEELDSGRMCGHLCRLSPNEPMAQSLVRHEHYLAHRVNIQEGQRIIDLGCGIGNPARSIARFTGANITGLNINAQQLRQARQLTQEAGLSYQVNFVEQNFLKIEFADDTFDGAYAIESTCYAPDLVEVYSEIFRVLKPGARFGVYEAVLTDKYDDNNPMHREVKTNIERGGGLARIHTSAEAIAAMKAVGFEVLAIDDLGARPDQIPWETQLSDPFLEKQGLLSFALLSVFFAARAMPLINRGLQAVVGKLEQMTVFPAGSQKVVDLVVTILDGMYRGGELGIFSPMFLIVARKPEA.

Belongs to the class I-like SAM-binding methyltransferase superfamily. Erg6/SMT family.

Its pathway is alkaloid biosynthesis. In terms of biological role, methyltransferase; part of the gene cluster that mediates the biosynthesis of paraherquamide, a fungal indole alkaloid that belongs to a family of natural products containing a characteristic bicyclo[2.2.2]diazaoctane core. The first steps in the biosynthesis of paraherquamide is the production of the beta-methyl-proline precursor from L-isoleucine. They require oxidation of a terminally hydroxylated L-isoleucine to the corresponding aldehyde by enzymes which have still to be identified. Spontaneous cyclization and dehydration would yield the 4-methyl pyrolline-5-carboxylic acid, which is then reduced by the pyrroline-5-carboxylate reductase phqD leading to the beta-methyl-proline precursor. The next step of paraherquamide biosynthesis involves coupling of beta-methyl-proline and L-tryptophan by the bimodular NRPS phqB, to produce a monooxopiperazine intermediate. The reductase (R) domain of phqB utilizes NADPH for hydride transfer to reduce the thioester bond of the T domain-tethered linear dipeptide to a hemithioaminal intermediate, which spontaneously cleaves the C-S bond to release the aldehyde product. This compound undergoes spontaneous cyclization and dehydration to give a dienamine which is reverse prenylated at C-2 by the reverse prenyltransferase phqJ. The other prenyltransferase present in the cluster, phqI may be a redundant gene in the pathway. During biosynthetic assembly, the key step to produce the polycyclic core is catalyzed by the bifunctional reductase and intramolecular [4+2] Diels-Alderase, phqE, resulting in formation of the [2.2.2] diazaoctane intermediate preparaherquamide. Following formation of preparaherquamide, an indole 2,3-epoxidation-initiated pinacol-like rearrangement is catalyzed by the phqK FAD-dependent monooxygenase. The prenyltransferase phqA, the cytochrome P450 monooxygenase phqL, and the FAD-linked oxidoreductase phqH (or the cytochrome P450 monooxygenase phqM), are proposed to be involved in the formation of the pyran ring. The FAD-dependent monooxygenase phqK is likely responsible for generation of the spiro-oxindole, and the N-methylation is likely mediated by the phqN methyltransferase leading to the isolable natural product paraherquamide F. However, the order of these biosynthetic steps has still to be determined. In late-stage paraherquamide biosynthesis, the third P450 monooxygenase, phqO, is probably responsible for the C-14 hydroxylation, transforming paraherquamide F to paraherquamide G, and paraherquamide E to the final product paraherquamide A. The expansion from the 6-membered ring pyran (in paraherquamides F and G) to the 7-membered dioxepin ring (in paraherquamides A and E) represents a poorly understood but intriguing process that probably involves the 2-oxoglutarate-dependent dioxygenase phqC. Finally, the remaining members of the paraherquamide cluster, including phqI as well as phqM (or phqH), do not have a clearly prescribed role and appear to be redundant. The polypeptide is Methyltransferase phqN (Penicillium fellutanum).